Reading from the N-terminus, the 101-residue chain is Putative metal transport protein HQ_3622A (101 aa).

Positions 1–32 (MKIISMSMDSWIQRAALMLLGLVIVAPFFGWT) are cleaved as a signal peptide. A helical transmembrane segment spans residues 75-95 (IGTLISAGVGTVLTLIVAFGA).

Its subcellular location is the cell membrane. Its function is as follows. May be involved in metal transport. The protein is Putative metal transport protein HQ_3622A of Haloquadratum walsbyi (strain DSM 16790 / HBSQ001).